We begin with the raw amino-acid sequence, 369 residues long: 1-aminocyclopropane-1-carboxylate oxidase homolog 2 (369 aa).

A Fe2OG dioxygenase domain is found at 217-318 (KGLRMLCHYF…VSVACFFHTH (102 aa)). Fe cation-binding residues include histidine 241, aspartate 243, and histidine 297.

It belongs to the iron/ascorbate-dependent oxidoreductase family. The cofactor is Fe cation.

This chain is 1-aminocyclopropane-1-carboxylate oxidase homolog 2, found in Arabidopsis thaliana (Mouse-ear cress).